Reading from the N-terminus, the 617-residue chain is DNA mismatch repair protein MutL (617 aa).

The interval 363 to 394 is disordered; that stretch reads YAPAYGARPPQPSAWSVDTSPHRPLDDGQNRF. The span at 382–392 shows a compositional bias: basic and acidic residues; that stretch reads SPHRPLDDGQN.

It belongs to the DNA mismatch repair MutL/HexB family.

Its function is as follows. This protein is involved in the repair of mismatches in DNA. It is required for dam-dependent methyl-directed DNA mismatch repair. May act as a 'molecular matchmaker', a protein that promotes the formation of a stable complex between two or more DNA-binding proteins in an ATP-dependent manner without itself being part of a final effector complex. The protein is DNA mismatch repair protein MutL of Allorhizobium ampelinum (strain ATCC BAA-846 / DSM 112012 / S4) (Agrobacterium vitis (strain S4)).